Consider the following 324-residue polypeptide: Glucosyl-3-phosphoglycerate synthase (324 aa).

UDP-alpha-D-glucose contacts are provided by residues proline 50–glutamate 54, serine 81, lysine 114, and aspartate 134–serine 135. Aspartate 136 is a binding site for Mn(2+). Residue glycine 184 to threonine 187 coordinates (2R)-3-phosphoglycerate. UDP-alpha-D-glucose is bound by residues tyrosine 229–glutamate 232 and arginine 256–arginine 261. Residue histidine 258 coordinates Mn(2+). Residue asparagine 260 participates in (2R)-3-phosphoglycerate binding.

This sequence belongs to the glycosyltransferase 2 family. Homotrimer. It depends on Mg(2+) as a cofactor. The cofactor is Mn(2+).

It catalyses the reaction an NDP-alpha-D-glucose + (2R)-3-phosphoglycerate = (2R)-2-O-(alpha-D-glucopyranosyl)-3-phospho-glycerate + a ribonucleoside 5'-diphosphate + H(+). It carries out the reaction (2R)-3-phosphoglycerate + UDP-alpha-D-glucose = (2R)-2-O-(alpha-D-glucopyranosyl)-3-phospho-glycerate + UDP + H(+). The enzyme catalyses ADP-alpha-D-glucose + (2R)-3-phosphoglycerate = (2R)-2-O-(alpha-D-glucopyranosyl)-3-phospho-glycerate + ADP + H(+). The catalysed reaction is GDP-D-glucose + (2R)-3-phosphoglycerate = (2R)-2-O-(alpha-D-glucopyranosyl)-3-phospho-glycerate + GDP + H(+). Involved in the biosynthesis of 6-O-methylglucose lipopolysaccarides (MGLPs). Catalyzes the transfer of the glucose moiety from a nuleotide sugar such as UDP-alpha-D-glucose to the position 2 of 3-phospho-D-glycerate (3-PGA) to form glucosyl-3-phosphoglycerate (GPG). It can use UDP-glucose, ADP-glucose and GDP-glucose as sugar donor substrates with decreasing affinity and with 3-PGA as an acceptor. D-glycerate can only be an acceptor with ADP-glucose and at a very low rate. In Mycobacterium bovis (strain ATCC BAA-935 / AF2122/97), this protein is Glucosyl-3-phosphoglycerate synthase (gpgS).